Here is a 207-residue protein sequence, read N- to C-terminus: Large ribosomal subunit protein uL4 (207 aa).

The segment at Ser-55–Gln-75 is disordered. Residues Gly-60–Gly-71 show a composition bias toward basic residues.

It belongs to the universal ribosomal protein uL4 family. Part of the 50S ribosomal subunit.

Functionally, one of the primary rRNA binding proteins, this protein initially binds near the 5'-end of the 23S rRNA. It is important during the early stages of 50S assembly. It makes multiple contacts with different domains of the 23S rRNA in the assembled 50S subunit and ribosome. Its function is as follows. Forms part of the polypeptide exit tunnel. The polypeptide is Large ribosomal subunit protein uL4 (Staphylococcus epidermidis (strain ATCC 35984 / DSM 28319 / BCRC 17069 / CCUG 31568 / BM 3577 / RP62A)).